Reading from the N-terminus, the 77-residue chain is Exodeoxyribonuclease 7 small subunit (77 aa).

This sequence belongs to the XseB family. As to quaternary structure, heterooligomer composed of large and small subunits.

Its subcellular location is the cytoplasm. It carries out the reaction Exonucleolytic cleavage in either 5'- to 3'- or 3'- to 5'-direction to yield nucleoside 5'-phosphates.. In terms of biological role, bidirectionally degrades single-stranded DNA into large acid-insoluble oligonucleotides, which are then degraded further into small acid-soluble oligonucleotides. In Chromobacterium violaceum (strain ATCC 12472 / DSM 30191 / JCM 1249 / CCUG 213 / NBRC 12614 / NCIMB 9131 / NCTC 9757 / MK), this protein is Exodeoxyribonuclease 7 small subunit.